A 374-amino-acid chain; its full sequence is DNA-directed RNA polymerase subunit alpha (374 aa).

The interval 1–257 is alpha N-terminal domain (alpha-NTD); the sequence is MSDNAHNLLY…KHFSIFENMD (257 aa). Residues 274–374 form an alpha C-terminal domain (alpha-CTD) region; that stretch reads KDDILHKLIL…EKIRAKNIKG (101 aa).

Belongs to the RNA polymerase alpha chain family. As to quaternary structure, homodimer. The RNAP catalytic core consists of 2 alpha, 1 beta, 1 beta' and 1 omega subunit. When a sigma factor is associated with the core the holoenzyme is formed, which can initiate transcription.

It carries out the reaction RNA(n) + a ribonucleoside 5'-triphosphate = RNA(n+1) + diphosphate. In terms of biological role, DNA-dependent RNA polymerase catalyzes the transcription of DNA into RNA using the four ribonucleoside triphosphates as substrates. The chain is DNA-directed RNA polymerase subunit alpha from Chlamydia pneumoniae (Chlamydophila pneumoniae).